Here is a 928-residue protein sequence, read N- to C-terminus: BCAS3 microtubule associated cell migration factor (928 aa).

Position 1 is an N-acetylmethionine (Met1). Lys215 participates in a covalent cross-link: Glycyl lysine isopeptide (Lys-Gly) (interchain with G-Cter in SUMO1); alternate. Lys215 is covalently cross-linked (Glycyl lysine isopeptide (Lys-Gly) (interchain with G-Cter in SUMO2); alternate). 2 required for recruitment to preautophagosomal structure in response to mitophagy regions span residues 254–312 (RGGA…SRRS) and 437–560 (YGGQ…IKAP). Residues Ser461, Ser480, and Ser488 each carry the phosphoserine modification. 2 disordered regions span residues 472–518 (TSKQ…PRLS) and 795–816 (VRSDPVSMPGSSRAVSDRRGVS). Composition is skewed to low complexity over residues 480–494 (SPVPGLSSSPSGSPL) and 505–514 (NNFTNNNPGN). A phosphoserine mark is found at Ser838, Ser886, and Ser898. Residues 868–928 (ESPSRDVVGS…PLSLFPTGFP (61 aa)) form a disordered region. Low complexity predominate over residues 887 to 901 (IETLSNSSGSTSGSI).

This sequence belongs to the BCAS3 family. As to quaternary structure, interacts with histone H3, ESR1, KAT2B and PELP1; the interactions occur in a estrogen-dependent manner. Interacts with beta-tubulin and VIM. Interacts (via C-terminal) with PHAF1; the interaction is requrired for the association with the phagophore. In terms of tissue distribution, expressed in blood islands and yolk sac blood islands (at protein level). Highly expressed in mammary tumors. Expressed in eostrogen-induced epithelial cells of mammary glands. Expressed in brain, heart, kidney, lung, liver and spleen. Expressed in embryonic stem cells, embryoid bodies, endothelial cells and fibroblasts.

Its subcellular location is the nucleus. It localises to the cytoplasm. The protein localises to the cytoskeleton. The protein resides in the preautophagosomal structure. Functionally, functions synergistically with PELP1 as a transcriptional coactivator of estrogen receptor-responsive genes. Stimulates histone acetyltransferase activity. Binds to chromatin. Plays a role in angiogenesis. Participates in the regulation of cell polarity and directional endothelial cell migration by mediating both the activation and recruitment of CDC42 and the reorganization of the actin cytoskeleton at the cell leading edge. Promotes filipodia formation. Plays a regulatory role in autophagic activity. In complex with PHAF1, associates with the preautophagosomal structure during both non-selective and selective autophagy. Probably binds phosphatidylinositol 3-phosphate (PtdIns3P) which would mediate the recruitment preautophagosomal structures. The protein is BCAS3 microtubule associated cell migration factor of Mus musculus (Mouse).